The primary structure comprises 491 residues: UDP-N-acetylmuramate--L-alanine ligase (491 aa).

Residue 126 to 132 (GTHGKTT) participates in ATP binding.

It belongs to the MurCDEF family.

The protein resides in the cytoplasm. The catalysed reaction is UDP-N-acetyl-alpha-D-muramate + L-alanine + ATP = UDP-N-acetyl-alpha-D-muramoyl-L-alanine + ADP + phosphate + H(+). The protein operates within cell wall biogenesis; peptidoglycan biosynthesis. Its function is as follows. Cell wall formation. The protein is UDP-N-acetylmuramate--L-alanine ligase of Escherichia coli (strain K12 / MC4100 / BW2952).